The sequence spans 214 residues: Probable transaldolase (214 aa).

Catalysis depends on K83, which acts as the Schiff-base intermediate with substrate.

It belongs to the transaldolase family. Type 3B subfamily.

The protein resides in the cytoplasm. It catalyses the reaction D-sedoheptulose 7-phosphate + D-glyceraldehyde 3-phosphate = D-erythrose 4-phosphate + beta-D-fructose 6-phosphate. The protein operates within carbohydrate degradation; pentose phosphate pathway; D-glyceraldehyde 3-phosphate and beta-D-fructose 6-phosphate from D-ribose 5-phosphate and D-xylulose 5-phosphate (non-oxidative stage): step 2/3. Transaldolase is important for the balance of metabolites in the pentose-phosphate pathway. The protein is Probable transaldolase of Clostridium tetani (strain Massachusetts / E88).